A 711-amino-acid chain; its full sequence is Polyribonucleotide nucleotidyltransferase (711 aa).

Mg(2+) contacts are provided by aspartate 486 and aspartate 492. In terms of domain architecture, KH spans 553–612 (PRIHTIKINPDKIKDVIGKGGSVIRALTEETGTTIEIEDDGTVKIAATDGEKAKHAIRRI). The S1 motif domain occupies 622–690 (GRVYTGKVTR…RQGRIRLSIK (69 aa)). The tract at residues 689-711 (IKEATEQSQPAAAPEAPAAEQGE) is disordered. Positions 694–711 (EQSQPAAAPEAPAAEQGE) are enriched in low complexity.

This sequence belongs to the polyribonucleotide nucleotidyltransferase family. As to quaternary structure, component of the RNA degradosome, which is a multiprotein complex involved in RNA processing and mRNA degradation. Mg(2+) serves as cofactor.

The protein resides in the cytoplasm. The catalysed reaction is RNA(n+1) + phosphate = RNA(n) + a ribonucleoside 5'-diphosphate. Involved in mRNA degradation. Catalyzes the phosphorolysis of single-stranded polyribonucleotides processively in the 3'- to 5'-direction. This is Polyribonucleotide nucleotidyltransferase from Escherichia coli O8 (strain IAI1).